Consider the following 660-residue polypeptide: Glycogen debranching enzyme (660 aa).

D338 serves as the catalytic Nucleophile. E373 serves as the catalytic Proton donor. Residues 460–472 are compositionally biased toward basic and acidic residues; that stretch reads NEANGEDNRDGAW. The disordered stretch occupies residues 460–482; sequence NEANGEDNRDGAWENHSNNHGYE.

The protein belongs to the glycosyl hydrolase 13 family.

It catalyses the reaction Hydrolysis of (1-&gt;6)-alpha-D-glucosidic linkages to branches with degrees of polymerization of three or four glucose residues in limit dextrin.. Its pathway is glycan degradation; glycogen degradation. Its function is as follows. Removes maltotriose and maltotetraose chains that are attached by 1,6-alpha-linkage to the limit dextrin main chain, generating a debranched limit dextrin. In Cronobacter sakazakii (strain ATCC BAA-894) (Enterobacter sakazakii), this protein is Glycogen debranching enzyme.